A 141-amino-acid chain; its full sequence is Hemoglobin subunit alpha (141 aa).

The Globin domain occupies 1-141 (VLSPADKSNV…VSTVLTSKYR (141 aa)). The residue at position 3 (Ser-3) is a Phosphoserine. An N6-succinyllysine mark is found at Lys-7 and Lys-11. Residue Lys-16 is modified to N6-acetyllysine; alternate. The residue at position 16 (Lys-16) is an N6-succinyllysine; alternate. A Phosphotyrosine modification is found at Tyr-24. Ser-35 is subject to Phosphoserine. Lys-40 is modified (N6-succinyllysine). Position 49 is a phosphoserine (Ser-49). His-58 is a binding site for O2. Heme b is bound at residue His-87. Ser-102 carries the post-translational modification Phosphoserine. Thr-108 is modified (phosphothreonine). Phosphoserine occurs at positions 124 and 131. A phosphothreonine mark is found at Thr-134 and Thr-137. Phosphoserine is present on Ser-138.

This sequence belongs to the globin family. In terms of assembly, heterotetramer of two alpha chains and two beta chains. In terms of tissue distribution, red blood cells.

Its function is as follows. Involved in oxygen transport from the lung to the various peripheral tissues. In terms of biological role, hemopressin acts as an antagonist peptide of the cannabinoid receptor CNR1. Hemopressin-binding efficiently blocks cannabinoid receptor CNR1 and subsequent signaling. The protein is Hemoglobin subunit alpha (HBA) of Leontocebus fuscicollis (Brown-mantled tamarin).